The primary structure comprises 103 residues: Seminal ribonuclease (103 aa).

Intrachain disulfides connect Cys12/Cys70, Cys26/Cys81, Cys44/Cys96, and Cys51/Cys58. Residues 27 to 31, Lys52, and Arg71 contribute to the substrate site; that span reads KLVNT.

It belongs to the pancreatic ribonuclease family. Homodimer; disulfide-linked.

Its subcellular location is the secreted. It carries out the reaction an [RNA] containing cytidine + H2O = an [RNA]-3'-cytidine-3'-phosphate + a 5'-hydroxy-ribonucleotide-3'-[RNA].. The catalysed reaction is an [RNA] containing uridine + H2O = an [RNA]-3'-uridine-3'-phosphate + a 5'-hydroxy-ribonucleotide-3'-[RNA].. Functionally, this enzyme hydrolyzes both single- and double-stranded RNA. The protein is Seminal ribonuclease (SRN) of Cephalophus silvicultor (Yellow-backed duiker).